The primary structure comprises 312 residues: Acetylglutamate kinase (312 aa).

Residues 74 to 75 (GG), Arg96, and Asn195 contribute to the substrate site.

The protein belongs to the acetylglutamate kinase family. ArgB subfamily.

The protein resides in the cytoplasm. It catalyses the reaction N-acetyl-L-glutamate + ATP = N-acetyl-L-glutamyl 5-phosphate + ADP. It functions in the pathway amino-acid biosynthesis; L-arginine biosynthesis; N(2)-acetyl-L-ornithine from L-glutamate: step 2/4. Catalyzes the ATP-dependent phosphorylation of N-acetyl-L-glutamate. The polypeptide is Acetylglutamate kinase (Nocardioides sp. (strain ATCC BAA-499 / JS614)).